A 99-amino-acid polypeptide reads, in one-letter code: Large ribosomal subunit protein bL27 (99 aa).

The propeptide occupies Met-1 to Phe-10.

The protein belongs to the bacterial ribosomal protein bL27 family. In terms of processing, the N-terminus is cleaved by ribosomal processing cysteine protease Prp.

This chain is Large ribosomal subunit protein bL27, found in Caldicellulosiruptor saccharolyticus (strain ATCC 43494 / DSM 8903 / Tp8T 6331).